Here is a 100-residue protein sequence, read N- to C-terminus: uncharacterized protein (100 aa).

Positions 42–84 (PGEPWRTAGGIGEGGAGGDGAAAGGEGDVHGRPAGAEDGEDGA) are disordered. The segment covering 50 to 67 (GGIGEGGAGGDGAAAGGE) has biased composition (gly residues).

This is an uncharacterized protein from Torque teno tamarin virus (isolate So-TTV2).